Reading from the N-terminus, the 93-residue chain is CRISPR-associated endoribonuclease Cas2 2 (93 aa).

Asp-9 lines the Mg(2+) pocket.

This sequence belongs to the CRISPR-associated endoribonuclease Cas2 protein family. Homodimer, forms a heterotetramer with a Cas1 homodimer. Requires Mg(2+) as cofactor.

Its function is as follows. CRISPR (clustered regularly interspaced short palindromic repeat), is an adaptive immune system that provides protection against mobile genetic elements (viruses, transposable elements and conjugative plasmids). CRISPR clusters contain sequences complementary to antecedent mobile elements and target invading nucleic acids. CRISPR clusters are transcribed and processed into CRISPR RNA (crRNA). Functions as a ssRNA-specific endoribonuclease. Involved in the integration of spacer DNA into the CRISPR cassette. The chain is CRISPR-associated endoribonuclease Cas2 2 from Synechocystis sp. (strain ATCC 27184 / PCC 6803 / Kazusa).